Here is a 2412-residue protein sequence, read N- to C-terminus: Centrosomal protein of 295 kDa (2412 aa).

The segment at 1–540 (MKRKGMNTKL…KQADQPEVCC (540 aa)) is necessary for centriole targeting and microtubule association. A Phosphoserine modification is found at Ser13. Coiled coils occupy residues 63–84 (AEEL…LEKL), 114–134 (AERK…QKNQ), 209–273 (DAHL…DLAR), 489–535 (RRKQ…QADQ), and 563–592 (HQLL…VLKE). 2 disordered regions span residues 600–641 (SALV…YQPV) and 739–762 (LDSQ…PSPF). At Ser634 the chain carries Phosphoserine. Residues 739–757 (LDSQQISSEDSENISSKPS) show a composition bias toward polar residues. Residues 811 to 841 (AQQGDLRFLQEQLELQKKVLQARQEAREKLL) are a coiled coil. Disordered regions lie at residues 871–891 (SASA…ATVS), 973–1005 (DTQS…QDGS), 1158–1178 (LSSP…SVRS), and 1216–1240 (WVDT…QQTG). Composition is skewed to polar residues over residues 993–1005 (PSQS…QDGS), 1158–1176 (LSSP…SVSV), and 1224–1240 (FQSS…QQTG). Coiled-coil stretches lie at residues 1300-1327 (QQDS…EAHE) and 1448-1493 (QHDD…SKQI). At Ser1573 the chain carries Phosphoserine. Disordered stretches follow at residues 1820 to 1895 (LAHD…LSSV), 1916 to 1937 (ESFS…EETD), 2028 to 2048 (DLSS…SESS), and 2089 to 2111 (TEGS…SQHA). Over residues 1836-1868 (SKSHDDNAEAVKVKKSDVEDHAVLSHAVSKEEA) the composition is skewed to basic and acidic residues. The segment covering 1885-1895 (QEISQEPLSSV) has biased composition (polar residues). Positions 1921–1935 (QTEHLEQESTNKQEE) are enriched in basic and acidic residues. The segment covering 2089–2108 (TEGSEQSFQQLRPEFSSQES) has biased composition (polar residues). The ALMS motif stretch occupies residues 2367–2412 (SLQEAFMTRQTLTERSYQRQREIWNKTRLPQTKVSKEKLPTGCTGS).

In terms of assembly, interacts (via ALMS motif) with microtubules; this interaction is direct.

The protein localises to the cytoplasm. It localises to the cytoskeleton. The protein resides in the microtubule organizing center. It is found in the centrosome. Its subcellular location is the centriole. The protein localises to the spindle. Functionally, centriole-enriched microtubule-binding protein involved in centriole biogenesis. Essential for the generation of the distal portion of new-born centrioles in a CPAP- and CEP120-mediated elongation dependent manner during the cell cycle S/G2 phase after formation of the initiating cartwheel structure. Required for the recruitment of centriolar proteins, such as POC1B, POC5 and CEP135, into the distal portion of centrioles. Also required for centriole-to-centrosome conversion during mitotic progression, but is dispensable for cartwheel removal or centriole disengagement. Binds to and stabilizes centriolar microtubule. May be involved in ciliogenesis. This Mus musculus (Mouse) protein is Centrosomal protein of 295 kDa.